We begin with the raw amino-acid sequence, 236 residues long: Small ribosomal subunit protein uS2c (236 aa).

It belongs to the universal ribosomal protein uS2 family.

The protein resides in the plastid. Its subcellular location is the chloroplast. This Oryza nivara (Indian wild rice) protein is Small ribosomal subunit protein uS2c (rps2).